Here is a 322-residue protein sequence, read N- to C-terminus: 2-oxoglutarate-dependent dioxygenase caaD (322 aa).

Residues 172 to 279 enclose the Fe2OG dioxygenase domain; it reads TGNAAMFLKL…FAVPAFWHGD (108 aa). The Fe cation site is built by histidine 200, aspartate 202, and histidine 259. Residue arginine 269 coordinates 2-oxoglutarate.

This sequence belongs to the iron/ascorbate-dependent oxidoreductase family. The cofactor is Fe(2+).

Its pathway is secondary metabolite biosynthesis. 2-oxoglutarate-dependent dioxygenase; part of the gene cluster that produces the acyltetronic acid derivatives carlosic acid, agglomerin F and carlosic acid methyl ether. CaaD catalyzes the sequential oxidations of the terminal C-10 methyl group of the caaC product to form carboxylic acid which is necessary for the biosynthesis of agglomerin F. The protein is 2-oxoglutarate-dependent dioxygenase caaD of Aspergillus niger (strain ATCC MYA-4892 / CBS 513.88 / FGSC A1513).